The chain runs to 318 residues: NADH-ubiquinone oxidoreductase chain 1 (318 aa).

Helical transmembrane passes span phenylalanine 2 to leucine 22, methionine 70 to proline 90, leucine 100 to glycine 120, alanine 147 to isoleucine 167, threonine 172 to glutamate 192, leucine 222 to phenylalanine 242, glutamate 253 to isoleucine 273, and leucine 294 to isoleucine 314.

It belongs to the complex I subunit 1 family. As to quaternary structure, core subunit of respiratory chain NADH dehydrogenase (Complex I) which is composed of 45 different subunits.

It is found in the mitochondrion inner membrane. The enzyme catalyses a ubiquinone + NADH + 5 H(+)(in) = a ubiquinol + NAD(+) + 4 H(+)(out). In terms of biological role, core subunit of the mitochondrial membrane respiratory chain NADH dehydrogenase (Complex I) which catalyzes electron transfer from NADH through the respiratory chain, using ubiquinone as an electron acceptor. Essential for the catalytic activity and assembly of complex I. In Bos mutus grunniens (Wild yak), this protein is NADH-ubiquinone oxidoreductase chain 1 (MT-ND1).